A 79-amino-acid chain; its full sequence is Small ribosomal subunit protein uS17 (79 aa).

This sequence belongs to the universal ribosomal protein uS17 family. In terms of assembly, part of the 30S ribosomal subunit.

Its function is as follows. One of the primary rRNA binding proteins, it binds specifically to the 5'-end of 16S ribosomal RNA. The sequence is that of Small ribosomal subunit protein uS17 from Orientia tsutsugamushi (strain Ikeda) (Rickettsia tsutsugamushi).